Consider the following 578-residue polypeptide: Solute carrier family 15 member 3 (578 aa).

Positions 1 to 15 are enriched in basic and acidic residues; sequence MSAPRAEEQPSRSGE. Positions 1–27 are disordered; that stretch reads MSAPRAEEQPSRSGERQPLVARGPRGP. Helical transmembrane passes span 33–53, 77–97, 102–122, 155–175, and 201–221; these read TAAAAVLLVQMLERAAFFGVT, LLFLGASYLLAPVGGWLADVY, LTISLSLLLYLAASGLLLTTI, PYCATTLYLVLLLLALAASSV, and WFYWSINLGAILSLLVVAFIE. N223 is a glycosylation site (N-linked (GlcNAc...) asparagine). A helical membrane pass occupies residues 232–252; that stretch reads IIVGLVGLAFFIFLFATPVFI. The tract at residues 280–301 is disordered; that stretch reads SRDSESAHLLPDQRSNQPGPSP. A helical membrane pass occupies residues 308 to 328; the sequence is FQVLVKILPVMVTLVPYWMVY. A glycan (N-linked (GlcNAc...) asparagine) is linked at N353. 2 helical membrane passes run 367-387 and 405-425; these read IPEAWLLLANVAVILILIPVK and LQKMALGMFFGFTSIIVAGVL. A glycan (N-linked (GlcNAc...) asparagine) is linked at N436. Helical transmembrane passes span 462-481, 494-514, and 538-558; these read YLLIGVSEIFASIPGLEFAY, GIFFCLSGVGSLLGSGLVALL, and YFFLLAGIEAVTAVLFLWIAG.

It belongs to the major facilitator superfamily. Proton-dependent oligopeptide transporter (POT/PTR) (TC 2.A.17) family. In terms of tissue distribution, expressed highly in bone marrow derived macrophages, and weakly in spleen and lung. Expressed in plasmacytoid dendritic cells (pDCs) in response to toll-like receptors (TLR) stimulation.

It localises to the lysosome membrane. Its subcellular location is the endosome membrane. The catalysed reaction is N-acetyl-D-muramoyl-L-alanyl-D-isoglutamine(out) + n H(+)(out) = N-acetyl-D-muramoyl-L-alanyl-D-isoglutamine(in) + n H(+)(in). It carries out the reaction glycylglycylglycine(out) + n H(+)(out) = glycylglycylglycine(in) + n H(+)(in). It catalyses the reaction carnosine(out) + n H(+)(out) = carnosine(in) + n H(+)(in). The enzyme catalyses L-histidine(out) + n H(+)(out) = L-histidine(in) + n H(+)(in). In terms of biological role, proton-coupled amino-acid transporter that transports free histidine and certain di- and tripeptides, and is involved in innate immune response. Also able to transport carnosine. Involved in the detection of microbial pathogens by toll-like receptors (TLRs) and NOD-like receptors (NLRs), probably by mediating transport of bacterial peptidoglycans across the endolysosomal membrane: catalyzes the transport of certain bacterial peptidoglycans, such as muramyl dipeptide (MDP), the NOD2 ligand. The chain is Solute carrier family 15 member 3 from Mus musculus (Mouse).